We begin with the raw amino-acid sequence, 210 residues long: Large ribosomal subunit protein uL4 (210 aa).

A disordered region spans residues 44-79 (QHQGTHKVKTRSEVSGGGRKPYRQKGTGNARRGSSR).

It belongs to the universal ribosomal protein uL4 family. In terms of assembly, part of the 50S ribosomal subunit.

Its function is as follows. One of the primary rRNA binding proteins, this protein initially binds near the 5'-end of the 23S rRNA. It is important during the early stages of 50S assembly. It makes multiple contacts with different domains of the 23S rRNA in the assembled 50S subunit and ribosome. Functionally, forms part of the polypeptide exit tunnel. The chain is Large ribosomal subunit protein uL4 from Chloroherpeton thalassium (strain ATCC 35110 / GB-78).